The following is a 279-amino-acid chain: Phosphatidylglycerol--prolipoprotein diacylglyceryl transferase (279 aa).

Transmembrane regions (helical) follow at residues 22–42 (WYGIIIACGILLGYFIAQAAL), 52–72 (LIDIIFYSAIVGFIVARIYFV), and 89–109 (IWHGGIAIHGGLIGGLISGII). Residue Arg-137 coordinates a 1,2-diacyl-sn-glycero-3-phospho-(1'-sn-glycerol). 2 consecutive transmembrane segments (helical) span residues 203-223 (LGETFFGYLIWYSVGRFFVEA) and 235-255 (IRVAQLVSVVLIMISVIFVIY).

Belongs to the Lgt family.

The protein localises to the cell membrane. It carries out the reaction L-cysteinyl-[prolipoprotein] + a 1,2-diacyl-sn-glycero-3-phospho-(1'-sn-glycerol) = an S-1,2-diacyl-sn-glyceryl-L-cysteinyl-[prolipoprotein] + sn-glycerol 1-phosphate + H(+). Its pathway is protein modification; lipoprotein biosynthesis (diacylglyceryl transfer). Functionally, catalyzes the transfer of the diacylglyceryl group from phosphatidylglycerol to the sulfhydryl group of the N-terminal cysteine of a prolipoprotein, the first step in the formation of mature lipoproteins. This Staphylococcus epidermidis (strain ATCC 35984 / DSM 28319 / BCRC 17069 / CCUG 31568 / BM 3577 / RP62A) protein is Phosphatidylglycerol--prolipoprotein diacylglyceryl transferase.